The primary structure comprises 413 residues: Floricaula/leafy homolog 1 (413 aa).

Disordered regions lie at residues 154–177 and 191–239; these read EGLSEEPVQQQEREAVGSGGGGTT and QRRR…RQRE. The span at 201–210 shows a compositional bias: basic and acidic residues; sequence GRERRGRASA. Over residues 211-225 the composition is skewed to acidic residues; that stretch reads EEDEETEEGQEDEWN. 3 consecutive DNA-binding regions follow at residues 238-242, 307-314, and 378-381; these read REHPF, NKPKMRHY, and YVPT.

It belongs to the FLO/LFY family. In terms of tissue distribution, expressed in floral meristems and in indeterminate vegetative meristems.

It is found in the nucleus. Probable transcription factor that act to specify determinacy in the progenitor cells for both flowers and leaves. This chain is Floricaula/leafy homolog 1 (FL1), found in Nicotiana tabacum (Common tobacco).